Here is a 1482-residue protein sequence, read N- to C-terminus: Lysine-specific demethylase rbr-2 (1482 aa).

The tract at residues 1 to 45 (MRGRRQEDIATTSSAPSTSTSHKKKTVSSNGSFRPRTQSNPGGKM) is disordered. A compositionally biased stretch (low complexity) spans 11–20 (TTSSAPSTST). Positions 30 to 41 (NGSFRPRTQSNP) are enriched in polar residues. Positions 61 to 102 (APVYYPTSEEFADPIEYVAKIRPDAERYGVVKIVPPSDFKPP) constitute a JmjN domain. One can recognise an ARID domain in the interval 126 to 223 (VKEKHTFIER…HIEPFNRNLK (98 aa)). A disordered region spans residues 244-316 (YQHHHGTMRS…SKTEEDEEEN (73 aa)). Basic and acidic residues predominate over residues 251–264 (MRSEPENTDGKNTE). The span at 277–288 (GRRRSKNKKPVP) shows a compositional bias: basic residues. A PHD-type 1 zinc finger spans residues 322 to 374 (QVYCVSCNEGKDEDLLLLCDIEGCNSGRHTYCCDPVLDEVPEGEWRCPKCIES). The region spanning 471-637 (QYANHAWNLN…KGRECVQSYS (167 aa)) is the JmjC domain. Residues His-517, Asp-520, and His-605 each contribute to the Fe cation site. The segment at 1206–1260 (LEGCCCLGGNKSDSSESVLSCIMCESQFHVRCCEWSTFFQHLPKGCFMCVRCLRG) adopts a PHD-type 2 zinc-finger fold. A disordered region spans residues 1361–1403 (QQRPVKSKPSASLFDPKLNSKRKRPNPSQKDSSKSKSRKRQGQ). Residues 1416–1471 (FKSCQARSCLKPFGDSVNWVMCDAGCKNWFHVICVGFTLREINDMHEYRCSSCLDH) form a PHD-type 3 zinc finger.

Belongs to the JARID1 histone demethylase family. Fe(2+) is required as a cofactor.

It localises to the nucleus. The catalysed reaction is N(6),N(6),N(6)-trimethyl-L-lysyl(4)-[histone H3] + 3 2-oxoglutarate + 3 O2 = L-lysyl(4)-[histone H3] + 3 formaldehyde + 3 succinate + 3 CO2. In terms of biological role, histone demethylase that specifically demethylates 'Lys-4' of histone H3, thereby playing a central role in histone code. Does not demethylate histone H3 'Lys-9', H3 'Lys-27', H3 'Lys-36', H3 'Lys-79' or H4 'Lys-20'. Demethylates trimethylated and dimethylated but not monomethylated H3 'Lys-4'. Involved in larval development and vulva formation. The chain is Lysine-specific demethylase rbr-2 (rbr-2) from Caenorhabditis briggsae.